Here is a 146-residue protein sequence, read N- to C-terminus: D-aminoacyl-tRNA deacylase (146 aa).

The Gly-cisPro motif, important for rejection of L-amino acids signature appears at 138–139; sequence GP.

The protein belongs to the DTD family. In terms of assembly, homodimer.

It is found in the cytoplasm. It catalyses the reaction glycyl-tRNA(Ala) + H2O = tRNA(Ala) + glycine + H(+). The catalysed reaction is a D-aminoacyl-tRNA + H2O = a tRNA + a D-alpha-amino acid + H(+). In terms of biological role, an aminoacyl-tRNA editing enzyme that deacylates mischarged D-aminoacyl-tRNAs. Also deacylates mischarged glycyl-tRNA(Ala), protecting cells against glycine mischarging by AlaRS. Acts via tRNA-based rather than protein-based catalysis; rejects L-amino acids rather than detecting D-amino acids in the active site. By recycling D-aminoacyl-tRNA to D-amino acids and free tRNA molecules, this enzyme counteracts the toxicity associated with the formation of D-aminoacyl-tRNA entities in vivo and helps enforce protein L-homochirality. The protein is D-aminoacyl-tRNA deacylase of Xanthomonas campestris pv. campestris (strain 8004).